The sequence spans 266 residues: MKKRTREQTGLIPRSILRTFERFRKQLLPGAEMLVIQEFRISRYQVIVSVRCLITLIFVPLFINILSKSFLIRPGIEYLWNQNHNEIFLNSYQENRALHDLHQFEEKVYFDSFVTDFAPSSNVLLQKQSVEIAKNYNLESIEAISNLFADFLSFLSLSVVFLLLKPQIIILKAFLSESLYSLSDTTKSFLLILGTDLLVGFHSPRGWEVFLEWLLRHFGLPENSDFMSLFVATFPVFLDTVFKYWIFRSLNKISPSTVATYHNIIE.

3 consecutive transmembrane segments (helical) span residues V46–L66, F151–L171, and F226–I246.

It belongs to the CemA family.

Its subcellular location is the plastid. It localises to the chloroplast inner membrane. It catalyses the reaction K(+)(in) + H(+)(out) = K(+)(out) + H(+)(in). Contributes to K(+)/H(+) antiport activity by supporting proton efflux to control proton extrusion and homeostasis in chloroplasts in a light-dependent manner to modulate photosynthesis. Prevents excessive induction of non-photochemical quenching (NPQ) under continuous-light conditions. Indirectly promotes efficient inorganic carbon uptake into chloroplasts. The polypeptide is Potassium/proton antiporter CemA (Chlorella vulgaris (Green alga)).